Here is a 764-residue protein sequence, read N- to C-terminus: Zinc finger CCCH domain-containing protein 24 (764 aa).

ANK repeat units follow at residues glutamate 108–arginine 138 and aspartate 143–alanine 175. The C3H1-type zinc finger occupies histidine 321–phenylalanine 348. 2 disordered regions span residues glutamine 616–valine 665 and lysine 698–serine 732. Residues serine 640 to glycine 659 are compositionally biased toward low complexity. Positions glutamine 705 to glycine 716 are enriched in polar residues.

The protein is Zinc finger CCCH domain-containing protein 24 of Oryza sativa subsp. japonica (Rice).